We begin with the raw amino-acid sequence, 266 residues long: HLA class II histocompatibility antigen, DR beta 5 chain (266 aa).

Residues 1 to 29 (MVCLKLPGGSYMAKLTVTLMVLSSPLALA) form the signal peptide. The tract at residues 30–124 (GDTRPRFLQQ…GESFTVQRRV (95 aa)) is beta-1. Topologically, residues 30-227 (GDTRPRFLQQ…RAQSESAQSK (198 aa)) are extracellular. Intrachain disulfides connect Cys-44-Cys-108 and Cys-146-Cys-202. Residue Asn-48 is glycosylated (N-linked (GlcNAc...) asparagine). A beta-2 region spans residues 125–227 (EPKVTVYPAR…RAQSESAQSK (103 aa)). In terms of domain architecture, Ig-like C1-type spans 126–214 (PKVTVYPART…EHPSVTSPLT (89 aa)). Residues 228 to 248 (MLSGVGGFVLGLLFLGAGLFI) traverse the membrane as a helical segment. Residues 249–266 (YFKNQKGHSGLHPTGLVS) lie on the Cytoplasmic side of the membrane.

Belongs to the MHC class II family. In terms of assembly, heterodimer of an alpha and a beta subunit; also referred as MHC class II molecule. In the endoplasmic reticulum (ER) it forms a heterononamer; 3 MHC class II molecules bind to a CD74 homotrimer (also known as invariant chain or HLA class II histocompatibility antigen gamma chain). In the endosomal/lysosomal system; CD74 undergoes sequential degradation by various proteases; leaving a small fragment termed CLIP on each MHC class II molecule. MHC class II molecule interacts with HLA_DM, and HLA_DO in B-cells, in order to release CLIP and facilitate the binding of antigenic peptides. Ubiquitinated by MARCH1 and MARCH8 at Lys-254 leading to down-regulation of MHC class II.

The protein resides in the cell membrane. It is found in the endoplasmic reticulum membrane. The protein localises to the golgi apparatus. Its subcellular location is the trans-Golgi network membrane. It localises to the endosome membrane. The protein resides in the lysosome membrane. It is found in the late endosome membrane. Its function is as follows. Binds peptides derived from antigens that access the endocytic route of antigen presenting cells (APC) and presents them on the cell surface for recognition by the CD4 T-cells. The peptide binding cleft accommodates peptides of 10-30 residues. The peptides presented by MHC class II molecules are generated mostly by degradation of proteins that access the endocytic route, where they are processed by lysosomal proteases and other hydrolases. Exogenous antigens that have been endocytosed by the APC are thus readily available for presentation via MHC II molecules, and for this reason this antigen presentation pathway is usually referred to as exogenous. As membrane proteins on their way to degradation in lysosomes as part of their normal turn-over are also contained in the endosomal/lysosomal compartments, exogenous antigens must compete with those derived from endogenous components. Autophagy is also a source of endogenous peptides, autophagosomes constitutively fuse with MHC class II loading compartments. In addition to APCs, other cells of the gastrointestinal tract, such as epithelial cells, express MHC class II molecules and CD74 and act as APCs, which is an unusual trait of the GI tract. To produce a MHC class II molecule that presents an antigen, three MHC class II molecules (heterodimers of an alpha and a beta chain) associate with a CD74 trimer in the ER to form a heterononamer. Soon after the entry of this complex into the endosomal/lysosomal system where antigen processing occurs, CD74 undergoes a sequential degradation by various proteases, including CTSS and CTSL, leaving a small fragment termed CLIP (class-II-associated invariant chain peptide). The removal of CLIP is facilitated by HLA-DM via direct binding to the alpha-beta-CLIP complex so that CLIP is released. HLA-DM stabilizes MHC class II molecules until primary high affinity antigenic peptides are bound. The MHC II molecule bound to a peptide is then transported to the cell membrane surface. In B-cells, the interaction between HLA-DM and MHC class II molecules is regulated by HLA-DO. Primary dendritic cells (DCs) also to express HLA-DO. Lysosomal microenvironment has been implicated in the regulation of antigen loading into MHC II molecules, increased acidification produces increased proteolysis and efficient peptide loading. The polypeptide is HLA class II histocompatibility antigen, DR beta 5 chain (Homo sapiens (Human)).